Reading from the N-terminus, the 297-residue chain is Indole-3-glycerol phosphate synthase (297 aa).

It belongs to the TrpC family.

The enzyme catalyses 1-(2-carboxyphenylamino)-1-deoxy-D-ribulose 5-phosphate + H(+) = (1S,2R)-1-C-(indol-3-yl)glycerol 3-phosphate + CO2 + H2O. It participates in amino-acid biosynthesis; L-tryptophan biosynthesis; L-tryptophan from chorismate: step 4/5. The chain is Indole-3-glycerol phosphate synthase from Trichodesmium erythraeum (strain IMS101).